The chain runs to 479 residues: Catalase A (479 aa).

The active site involves His63. Tyr346 contacts heme.

This sequence belongs to the catalase family. Heme serves as cofactor.

It is found in the peroxisome matrix. The catalysed reaction is 2 H2O2 = O2 + 2 H2O. Functionally, catalyzes the degradation of hydrogen peroxide (H(2)O(2)) generated by peroxisomal oxidases to water and oxygen, thereby protecting cells from the toxic effects of hydrogen peroxide. The protein is Catalase A (catA) of Botryotinia fuckeliana (Noble rot fungus).